Reading from the N-terminus, the 119-residue chain is Ribosome-binding factor A (119 aa).

It belongs to the RbfA family. Monomer. Binds 30S ribosomal subunits, but not 50S ribosomal subunits or 70S ribosomes.

Its subcellular location is the cytoplasm. Its function is as follows. One of several proteins that assist in the late maturation steps of the functional core of the 30S ribosomal subunit. Associates with free 30S ribosomal subunits (but not with 30S subunits that are part of 70S ribosomes or polysomes). Required for efficient processing of 16S rRNA. May interact with the 5'-terminal helix region of 16S rRNA. This Pelodictyon phaeoclathratiforme (strain DSM 5477 / BU-1) protein is Ribosome-binding factor A.